A 547-amino-acid polypeptide reads, in one-letter code: Mitogen-activated protein kinase 15 (547 aa).

The interval 1 to 20 (MCAAEVDRHVSQRYLIKRRL) is ubiquitin-conjugating. Positions 14 to 305 (YLIKRRLGKG…AEQALQHPYV (292 aa)) constitute a Protein kinase domain. ATP-binding positions include 20–28 (LGKGAYGIV) and lysine 43. The active-site Proton acceptor is aspartate 138. A Phosphothreonine modification is found at threonine 176. Positions 176–178 (TEY) match the TXY motif. At tyrosine 178 the chain carries Phosphotyrosine. The necessary to interact with ESRRA, to regulate its subcellular localization and to inhibit its transcriptional activity stretch occupies residues 266–286 (LDALLPPDTPPEALDLLKRLL). The tract at residues 301-380 (QHPYVQRFHC…SQRQSLKPGV (80 aa)) is requires for interaction with GABARAP, MAP1LC3B AND GABARAPL1. The disordered stretch occupies residues 370-503 (ASQRQSLKPG…EAPEPRPGRR (134 aa)). PXXXP motif repeat units follow at residues 378-382 (PGVLP) and 385-389 (LAETP). 2 PXXXP motif; regulates binding with chromatin and interaction with PCNA repeats span residues 393–397 (RGPKP) and 401–405 (HGHDP). Over residues 401–414 (HGHDPEHVEVRRQS) the composition is skewed to basic and acidic residues. Omega-N-methylarginine is present on arginine 449. A compositionally biased stretch (polar residues) spans 454-465 (SLTSQAAAQAAN). Residues 481-490 (AVGARRVPSR) show a composition bias toward low complexity. Basic and acidic residues predominate over residues 491–500 (LPREAPEPRP).

The protein belongs to the protein kinase superfamily. CMGC Ser/Thr protein kinase family. MAP kinase subfamily. Interacts with CSK/c-Src, ABL1, RET and TGFB1I1. Interacts with GABARAP, MAP1LC3B and GABARAPL1; controls, in a kinase-dependent fashion, both basal and starvation-induced autophagy. Interacts with ESRRA; promotes re-localization of ESRRA to the cytoplasm through a XPO1-dependent mechanism then inhibits ESRRA transcriptional activity. Interacts with PCNA; the interaction is chromatin binding- and kinase activity-dependent and prevents MDM2-mediated PCNA destruction by inhibiting the association of PCNA with MDM2. Interacts with DVL2. Interacts with CLIC3; MAPK15 does not phosphorylates CLIC3. Autophosphorylated on Thr-176 and Tyr-178; activates the enzyme. In terms of processing, dephosphorylated by PTPN1. Post-translationally, ubiquitinated. Ubiquitination may allow its tight kinase activity regulation and rapid turnover. May be ubiquitinated by a SCF E3 ligase. As to expression, ubiquitously expressed at a weak level. Highest expression is found in testis and to a lower extent in lung.

It is found in the cytoplasm. The protein localises to the cytoskeleton. It localises to the cilium basal body. Its subcellular location is the cell junction. The protein resides in the tight junction. It is found in the microtubule organizing center. The protein localises to the centrosome. It localises to the centriole. Its subcellular location is the cytoplasmic vesicle. The protein resides in the autophagosome. It is found in the golgi apparatus. The protein localises to the nucleus. It localises to the spindle. The catalysed reaction is L-seryl-[protein] + ATP = O-phospho-L-seryl-[protein] + ADP + H(+). It catalyses the reaction L-threonyl-[protein] + ATP = O-phospho-L-threonyl-[protein] + ADP + H(+). Its activity is regulated as follows. Activated by threonine and tyrosine phosphorylation. Inhibited by dual specificity phosphatases, such as DUSP1. Phosphorylation and activation in response to DNA damaging agents, serum stimulation. Constitutively activated when phosphorylated on Tyr-178. Activity depends on the relative rates of MAPK15 autophosphorylation and dephosphorylation by PTPN1. Atypical MAPK protein that regulates several process such as autophagy, ciliogenesis, protein trafficking/secretion and genome integrity, in a kinase activity-dependent manner. Controls both, basal and starvation-induced autophagy throught its interaction with GABARAP, MAP1LC3B and GABARAPL1 leading to autophagosome formation, SQSTM1 degradation and reduced MAP1LC3B inhibitory phosphorylation. Regulates primary cilium formation and the localization of ciliary proteins involved in cilium structure, transport, and signaling. Prevents the relocation of the sugar-adding enzymes from the Golgi to the endoplasmic reticulum, thereby restricting the production of sugar-coated proteins. Upon amino-acid starvation, mediates transitional endoplasmic reticulum site disassembly and inhibition of secretion. Binds to chromatin leading to MAPK15 activation and interaction with PCNA, that which protects genomic integrity by inhibiting MDM2-mediated degradation of PCNA. Regulates DA transporter (DAT) activity and protein expression via activation of RhoA. In response to H(2)O(2) treatment phosphorylates ELAVL1, thus preventing it from binding to the PDCD4 3'UTR and rendering the PDCD4 mRNA accessible to miR-21 and leading to its degradation and loss of protein expression. Also functions in a kinase activity-independent manner as a negative regulator of growth. Phosphorylates in vitro FOS and MBP. During oocyte maturation, plays a key role in the microtubule organization and mei- otic cell cycle progression in oocytes, fertilized eggs, and early embryos. Interacts with ESRRA promoting its re-localization from the nucleus to the cytoplasm and then prevents its transcriptional activity. The chain is Mitogen-activated protein kinase 15 (Mapk15) from Rattus norvegicus (Rat).